The primary structure comprises 237 residues: MAVEGGMKCVKFLLYVLLLVFCACAVGLIAVGVGTHLVLNQTITHGATPSFLLPVVIIAVGAFLFLVAFVGCCGACKENYCLMITFAIFLSLIMLVEVAAAIAGYVFRDKVRSEFNKDFRQQMKNYPKDNQTASILDKMQKDFECCGAANYTDWEKILAVTNKVPDSCCVNITHNCGINFVVKDIHTEGCVEKIAAWLRKNVLVVAAAALGIAFVEILGIVLACCLVKSIRSGYEVM.

Residues 1-11 (MAVEGGMKCVK) are Cytoplasmic-facing. Residues 12–32 (FLLYVLLLVFCACAVGLIAVG) traverse the membrane as a helical segment. Over 33-51 (VGTHLVLNQTITHGATPSF) the chain is Extracellular. N-linked (GlcNAc...) asparagine glycosylation occurs at asparagine 40. Residues 52 to 72 (LLPVVIIAVGAFLFLVAFVGC) traverse the membrane as a helical segment. Residues 73–81 (CGACKENYC) are Cytoplasmic-facing. A helical membrane pass occupies residues 82 to 102 (LMITFAIFLSLIMLVEVAAAI). Residues 103–202 (AGYVFRDKVR…KIAAWLRKNV (100 aa)) lie on the Extracellular side of the membrane. Residues asparagine 130, asparagine 150, and asparagine 171 are each glycosylated (N-linked (GlcNAc...) asparagine). Residues 203–223 (LVVAAAALGIAFVEILGIVLA) traverse the membrane as a helical segment. The Cytoplasmic segment spans residues 224–237 (CCLVKSIRSGYEVM). A Lysosomal targeting motif motif is present at residues 233–237 (GYEVM).

It belongs to the tetraspanin (TM4SF) family. In terms of assembly, interacts with TIMP1 and ITGB1 and recruits TIMP1 to ITGB1. Interacts with CD9. Identified in a complex with CD9 and ITGB3. Interacts with PMEL. Interacts with KDR/VEGFR2; identified in a complex with ITGB1 and KDR/VEGFR2 and is required to recruit KDR to ITGB1 complexes. Interacts with SYT7. Post-translationally, palmitoylated at a low, basal level in unstimulated platelets. The level of palmitoylation increases when platelets are activated by thrombin (in vitro).

Its subcellular location is the cell membrane. It localises to the lysosome membrane. It is found in the late endosome membrane. The protein resides in the endosome. The protein localises to the multivesicular body. Its subcellular location is the melanosome. It localises to the secreted. It is found in the extracellular exosome. The protein resides in the cell surface. Functionally, functions as a cell surface receptor for TIMP1 and plays a role in the activation of cellular signaling cascades. Plays a role in the activation of ITGB1 and integrin signaling, leading to the activation of AKT, FAK/PTK2 and MAP kinases. Promotes cell survival, reorganization of the actin cytoskeleton, cell adhesion, spreading and migration, via its role in the activation of AKT and FAK/PTK2. Plays a role in VEGFA signaling via its role in regulating the internalization of KDR/VEGFR2. Plays a role in intracellular vesicular transport processes, and is required for normal trafficking of the PMEL luminal domain that is essential for the development and maturation of melanocytes. Plays a role in the adhesion of leukocytes onto endothelial cells via its role in the regulation of SELP trafficking. May play a role in mast cell degranulation in response to Ms4a2/FceRI stimulation, but not in mast cell degranulation in response to other stimuli. This is CD63 antigen (CD63) from Bos taurus (Bovine).